A 337-amino-acid chain; its full sequence is Phosphate acyltransferase (337 aa).

The protein belongs to the PlsX family. In terms of assembly, homodimer. Probably interacts with PlsY.

It is found in the cytoplasm. The catalysed reaction is a fatty acyl-[ACP] + phosphate = an acyl phosphate + holo-[ACP]. It functions in the pathway lipid metabolism; phospholipid metabolism. Functionally, catalyzes the reversible formation of acyl-phosphate (acyl-PO(4)) from acyl-[acyl-carrier-protein] (acyl-ACP). This enzyme utilizes acyl-ACP as fatty acyl donor, but not acyl-CoA. The polypeptide is Phosphate acyltransferase (Ehrlichia canis (strain Jake)).